The sequence spans 193 residues: MKLLIQGNNIAVTESIHDYVESKLEKATKHFQTFATKVDVHLSVANNARITDKHKAEVTVYANGTVIRAQEGSENLYASIDLVSDKIARQLRKYKEKNFGKKTHVQEKTSEVLPEDPVPDNLIGDRAPELPSEVVRMKYFAMPPMTIDEALEQLQLVDHDFYMFLNKDTNAINVIYIRNHGGYGVIQPRLGKE.

The protein belongs to the HPF/YfiA ribosome-associated protein family. Long HPF subfamily. As to quaternary structure, interacts with 100S ribosomes.

The protein resides in the cytoplasm. Its function is as follows. Might modulate either transcription and/or translation. In terms of biological role, required for dimerization of active 70S ribosomes into 100S ribosomes in stationary phase; 100S ribosomes are translationally inactive and sometimes present during exponential growth. The protein is Ribosome hibernation promotion factor of Picosynechococcus sp. (strain ATCC 27264 / PCC 7002 / PR-6) (Agmenellum quadruplicatum).